Here is a 777-residue protein sequence, read N- to C-terminus: Histone-lysine N-methyltransferase set9 (777 aa).

In terms of domain architecture, SET spans 117-231 (CPFEVNATNR…VGEEITVTYS (115 aa)). 2 disordered regions span residues 263–414 (AVQK…ILSP) and 682–718 (RMGSKGKQGSSAPSTKGTPAGEKNEQSAKQEQSQGQY). Over residues 291 to 301 (TALQASRTPSV) the composition is skewed to polar residues. Low complexity predominate over residues 323 to 337 (TSTTDSAAQGAGADG). Polar residues-rich tracts occupy residues 371–405 (TAPSRGSSDNETSKSPLSFSTTNDNVTDATSQGSE) and 688–698 (KQGSSAPSTKG).

The protein belongs to the class V-like SAM-binding methyltransferase superfamily. Histone-lysine methyltransferase family. Suvar4-20 subfamily.

It is found in the nucleus. Its subcellular location is the chromosome. It catalyses the reaction L-lysyl(20)-[histone H4] + 3 S-adenosyl-L-methionine = N(6),N(6),N(6)-trimethyl-L-lysyl(20)-[histone H4] + 3 S-adenosyl-L-homocysteine + 3 H(+). Functionally, histone methyltransferase that trimethylates 'Lys-20' of histone H4 to form H4K20me3. This chain is Histone-lysine N-methyltransferase set9 (hlm-1), found in Neurospora crassa (strain ATCC 24698 / 74-OR23-1A / CBS 708.71 / DSM 1257 / FGSC 987).